Consider the following 349-residue polypeptide: DNA polymerase IV (349 aa).

The region spanning 4–185 is the UmuC domain; the sequence is IIHIDCDCFY…LPVAKLHGVG (182 aa). The Mg(2+) site is built by D8 and D103. E104 is an active-site residue.

The protein belongs to the DNA polymerase type-Y family. Monomer. It depends on Mg(2+) as a cofactor.

The protein resides in the cytoplasm. The enzyme catalyses DNA(n) + a 2'-deoxyribonucleoside 5'-triphosphate = DNA(n+1) + diphosphate. Poorly processive, error-prone DNA polymerase involved in untargeted mutagenesis. Copies undamaged DNA at stalled replication forks, which arise in vivo from mismatched or misaligned primer ends. These misaligned primers can be extended by PolIV. Exhibits no 3'-5' exonuclease (proofreading) activity. May be involved in translesional synthesis, in conjunction with the beta clamp from PolIII. This is DNA polymerase IV from Pseudomonas aeruginosa (strain UCBPP-PA14).